We begin with the raw amino-acid sequence, 88 residues long: Probable small nuclear ribonucleoprotein F (88 aa).

Residues 7 to 79 (NPKPFLNNLT…VLYVRGVPED (73 aa)) enclose the Sm domain.

Belongs to the snRNP Sm proteins family. SmF/LSm6 subfamily.

It is found in the nucleus. Its function is as follows. Probable common Sm protein, is found in U1 and U2 snRNPs and may be part of the spliceosome. This Arabidopsis thaliana (Mouse-ear cress) protein is Probable small nuclear ribonucleoprotein F.